Consider the following 481-residue polypeptide: UDP-N-acetylmuramate--L-alanine ligase (481 aa).

123–129 (GTHGKTT) contributes to the ATP binding site.

It belongs to the MurCDEF family.

The protein localises to the cytoplasm. It catalyses the reaction UDP-N-acetyl-alpha-D-muramate + L-alanine + ATP = UDP-N-acetyl-alpha-D-muramoyl-L-alanine + ADP + phosphate + H(+). The protein operates within cell wall biogenesis; peptidoglycan biosynthesis. Its function is as follows. Cell wall formation. In Pseudomonas fluorescens (strain SBW25), this protein is UDP-N-acetylmuramate--L-alanine ligase.